A 342-amino-acid chain; its full sequence is Tetraacyldisaccharide 4'-kinase (342 aa).

Residue 68-75 coordinates ATP; it reads TVGGTGKT.

This sequence belongs to the LpxK family.

It carries out the reaction a lipid A disaccharide + ATP = a lipid IVA + ADP + H(+). The protein operates within glycolipid biosynthesis; lipid IV(A) biosynthesis; lipid IV(A) from (3R)-3-hydroxytetradecanoyl-[acyl-carrier-protein] and UDP-N-acetyl-alpha-D-glucosamine: step 6/6. Its function is as follows. Transfers the gamma-phosphate of ATP to the 4'-position of a tetraacyldisaccharide 1-phosphate intermediate (termed DS-1-P) to form tetraacyldisaccharide 1,4'-bis-phosphate (lipid IVA). The chain is Tetraacyldisaccharide 4'-kinase from Burkholderia lata (strain ATCC 17760 / DSM 23089 / LMG 22485 / NCIMB 9086 / R18194 / 383).